The sequence spans 264 residues: 3-methyl-2-oxobutanoate hydroxymethyltransferase (264 aa).

Mg(2+)-binding residues include aspartate 45 and aspartate 84. 3-methyl-2-oxobutanoate is bound by residues 45 to 46 (DS), aspartate 84, and lysine 112. Position 114 (glutamate 114) interacts with Mg(2+). The active-site Proton acceptor is glutamate 181.

This sequence belongs to the PanB family. As to quaternary structure, homodecamer; pentamer of dimers. Requires Mg(2+) as cofactor.

Its subcellular location is the cytoplasm. The catalysed reaction is 3-methyl-2-oxobutanoate + (6R)-5,10-methylene-5,6,7,8-tetrahydrofolate + H2O = 2-dehydropantoate + (6S)-5,6,7,8-tetrahydrofolate. It participates in cofactor biosynthesis; (R)-pantothenate biosynthesis; (R)-pantoate from 3-methyl-2-oxobutanoate: step 1/2. Its function is as follows. Catalyzes the reversible reaction in which hydroxymethyl group from 5,10-methylenetetrahydrofolate is transferred onto alpha-ketoisovalerate to form ketopantoate. This Shigella boydii serotype 18 (strain CDC 3083-94 / BS512) protein is 3-methyl-2-oxobutanoate hydroxymethyltransferase.